The primary structure comprises 323 residues: Voltage-dependent calcium channel gamma-2 subunit (323 aa).

Residues 10 to 30 (MLLTTVGAFAAFSLMTIAVGT) form a helical membrane-spanning segment. A glycan (N-linked (GlcNAc...) asparagine) is linked at Asn48. 3 helical membrane-spanning segments follow: residues 104 to 124 (SSIF…CIAA), 134 to 154 (IILS…IGII), and 182 to 202 (FGAL…HMFI). The disordered stretch occupies residues 233–261 (YQRRSRSSSRSTEPSHSRDASPVGIKGFN). Ser253 bears the Phosphoserine mark. Position 271 is a phosphotyrosine (Tyr271). Thr321 is subject to Phosphothreonine.

The protein belongs to the PMP-22/EMP/MP20 family. CACNG subfamily. In terms of assembly, the L-type calcium channel is composed of five subunits: alpha-1, alpha-2/delta, beta and gamma. Interacts with the PDZ domains of DLG4/PSD-95 and DLG1/SAP97. May interact with GOPC. Acts as an auxiliary subunit for AMPA-selective glutamate receptors (AMPARs). Found in a complex with GRIA1, GRIA2, GRIA3, GRIA4, CNIH2, CNIH3, CACNG3, CACNG4, CACNG5, CACNG7 and CACNG8. Interacts with GRIA1 and GRIA2. Interacts with MPP2. Post-translationally, phosphorylation of Thr-321 impairs interaction with DLG1 and DLG4. Brain.

The protein localises to the membrane. The protein resides in the synapse. It localises to the synaptosome. Its function is as follows. Regulates the trafficking and gating properties of AMPA-selective glutamate receptors (AMPARs). Promotes their targeting to the cell membrane and synapses and modulates their gating properties by slowing their rates of activation, deactivation and desensitization. Does not show subunit-specific AMPA receptor regulation and regulates all AMPAR subunits. Thought to stabilize the calcium channel in an inactivated (closed) state. In Homo sapiens (Human), this protein is Voltage-dependent calcium channel gamma-2 subunit (CACNG2).